The sequence spans 78 residues: Large ribosomal subunit protein bL28 (78 aa).

The protein belongs to the bacterial ribosomal protein bL28 family.

The protein is Large ribosomal subunit protein bL28 of Microcystis aeruginosa (strain NIES-843 / IAM M-2473).